We begin with the raw amino-acid sequence, 101 residues long: Protein Tat (101 aa).

An interaction with human CREBBP region spans residues 1 to 24 (MDPVDPKLEPWNHPGSQPTTPCNK). Residues 1 to 48 (MDPVDPKLEPWNHPGSQPTTPCNKCYCKVCCWHCQVCFLNKGLGISYG) form a transactivation region. Residues Cys22, Cys25, and Cys27 each contribute to the Zn(2+) site. The segment at 22-37 (CNKCYCKVCCWHCQVC) is cysteine-rich. Position 28 is an N6-acetyllysine; by host PCAF (Lys28). Zn(2+) is bound by residues Cys30, His33, Cys34, and Cys37. The segment at 38 to 48 (FLNKGLGISYG) is core. A disordered region spans residues 48-101 (GRKKRRPRRGTPQGSKDHQNPVPKQPLPITSGNPTGSEKPKKEVASKTETDPLD). Positions 49–57 (RKKRRPRRG) match the Nuclear localization signal, RNA-binding (TAR), and protein transduction motif. Residues 49 to 86 (RKKRRPRRGTPQGSKDHQNPVPKQPLPITSGNPTGSEK) are interaction with the host capping enzyme RNGTT. 2 positions are modified to N6-acetyllysine; by host EP300 and GCN5L2: Lys50 and Lys51. Residues Arg52 and Arg53 each carry the asymmetric dimethylarginine; by host PRMT6 modification. Lys71 participates in a covalent cross-link: Glycyl lysine isopeptide (Lys-Gly) (interchain with G-Cter in ubiquitin). The segment covering 85–101 (EKPKKEVASKTETDPLD) has biased composition (basic and acidic residues).

It belongs to the lentiviruses Tat family. In terms of assembly, interacts with host CCNT1. Associates with the P-TEFb complex composed at least of Tat, P-TEFb (CDK9 and CCNT1), TAR RNA, RNA Pol II. Recruits the HATs CREBBP, TAF1/TFIID, EP300, PCAF and GCN5L2. Interacts with host KAT5/Tip60; this interaction targets the latter to degradation. Interacts with the host deacetylase SIRT1. Interacts with host capping enzyme RNGTT; this interaction stimulates RNGTT. Binds to host KDR, and to the host integrins ITGAV/ITGB3 and ITGA5/ITGB1. Interacts with host KPNB1/importin beta-1 without previous binding to KPNA1/importin alpha-1. Interacts with EIF2AK2. Interacts with host nucleosome assembly protein NAP1L1; this interaction may be required for the transport of Tat within the nucleus, since the two proteins interact at the nuclear rim. Interacts with host C1QBP/SF2P32; this interaction involves lysine-acetylated Tat. Interacts with the host chemokine receptors CCR2, CCR3 and CXCR4. Interacts with host DPP4/CD26; this interaction may trigger an anti-proliferative effect. Interacts with host LDLR. Interacts with the host extracellular matrix metalloproteinase MMP1. Interacts with host PRMT6; this interaction mediates Tat's methylation. Interacts with, and is ubiquitinated by MDM2/Hdm2. Interacts with host PSMC3 and HTATIP2. Interacts with STAB1; this interaction may overcome SATB1-mediated repression of IL2 and IL2RA (interleukin) in T cells by binding to the same domain than HDAC1. Interacts (when acetylated) with human CDK13, thereby increasing HIV-1 mRNA splicing and promoting the production of the doubly spliced HIV-1 protein Nef. Interacts with host TBP; this interaction modulates the activity of transcriptional pre-initiation complex. Interacts with host RELA. Interacts with host PLSCR1; this interaction negatively regulates Tat transactivation activity by altering its subcellular distribution. In terms of processing, asymmetrical arginine methylation by host PRMT6 seems to diminish the transactivation capacity of Tat and affects the interaction with host CCNT1. Acetylation by EP300, CREBBP, GCN5L2/GCN5 and PCAF regulates the transactivation activity of Tat. EP300-mediated acetylation of Lys-50 promotes dissociation of Tat from the TAR RNA through the competitive binding to PCAF's bromodomain. In addition, the non-acetylated Tat's N-terminus can also interact with PCAF. PCAF-mediated acetylation of Lys-28 enhances Tat's binding to CCNT1. Lys-50 is deacetylated by SIRT1. Post-translationally, polyubiquitination by host MDM2 does not target Tat to degradation, but activates its transactivation function and fosters interaction with CCNT1 and TAR RNA. In terms of processing, phosphorylated by EIF2AK2 on serine and threonine residues adjacent to the basic region important for TAR RNA binding and function. Phosphorylation of Tat by EIF2AK2 is dependent on the prior activation of EIF2AK2 by dsRNA.

The protein localises to the host nucleus. It localises to the host nucleolus. It is found in the host cytoplasm. The protein resides in the secreted. Its function is as follows. Transcriptional activator that increases RNA Pol II processivity, thereby increasing the level of full-length viral transcripts. Recognizes a hairpin structure at the 5'-LTR of the nascent viral mRNAs referred to as the transactivation responsive RNA element (TAR) and recruits the cyclin T1-CDK9 complex (P-TEFb complex) that will in turn hyperphosphorylate the RNA polymerase II to allow efficient elongation. The CDK9 component of P-TEFb and other Tat-activated kinases hyperphosphorylate the C-terminus of RNA Pol II that becomes stabilized and much more processive. Other factors such as HTATSF1/Tat-SF1, SUPT5H/SPT5, and HTATIP2 are also important for Tat's function. Besides its effect on RNA Pol II processivity, Tat induces chromatin remodeling of proviral genes by recruiting the histone acetyltransferases (HATs) CREBBP, EP300 and PCAF to the chromatin. This also contributes to the increase in proviral transcription rate, especially when the provirus integrates in transcriptionally silent region of the host genome. To ensure maximal activation of the LTR, Tat mediates nuclear translocation of NF-kappa-B by interacting with host RELA. Through its interaction with host TBP, Tat may also modulate transcription initiation. Tat can reactivate a latently infected cell by penetrating in it and transactivating its LTR promoter. In the cytoplasm, Tat is thought to act as a translational activator of HIV-1 mRNAs. Extracellular circulating Tat can be endocytosed by surrounding uninfected cells via the binding to several surface receptors such as CD26, CXCR4, heparan sulfate proteoglycans (HSPG) or LDLR. Neurons are rarely infected, but they internalize Tat via their LDLR. Through its interaction with nuclear HATs, Tat is potentially able to control the acetylation-dependent cellular gene expression. Modulates the expression of many cellular genes involved in cell survival, proliferation or in coding for cytokines or cytokine receptors. Tat plays a role in T-cell and neurons apoptosis. Tat induced neurotoxicity and apoptosis probably contribute to neuroAIDS. Circulating Tat also acts as a chemokine-like and/or growth factor-like molecule that binds to specific receptors on the surface of the cells, affecting many cellular pathways. In the vascular system, Tat binds to ITGAV/ITGB3 and ITGA5/ITGB1 integrins dimers at the surface of endothelial cells and competes with bFGF for heparin-binding sites, leading to an excess of soluble bFGF. The chain is Protein Tat from Homo sapiens (Human).